The sequence spans 243 residues: 5'-methylthioadenosine/S-adenosylhomocysteine nucleosidase (243 aa).

The active-site Proton acceptor is the E12. Substrate contacts are provided by residues G78, M158, and M179–E180. The active-site Proton donor is the D203.

It belongs to the PNP/UDP phosphorylase family. MtnN subfamily.

The enzyme catalyses S-adenosyl-L-homocysteine + H2O = S-(5-deoxy-D-ribos-5-yl)-L-homocysteine + adenine. It carries out the reaction S-methyl-5'-thioadenosine + H2O = 5-(methylsulfanyl)-D-ribose + adenine. It catalyses the reaction 5'-deoxyadenosine + H2O = 5-deoxy-D-ribose + adenine. It participates in amino-acid biosynthesis; L-methionine biosynthesis via salvage pathway; S-methyl-5-thio-alpha-D-ribose 1-phosphate from S-methyl-5'-thioadenosine (hydrolase route): step 1/2. Functionally, catalyzes the irreversible cleavage of the glycosidic bond in both 5'-methylthioadenosine (MTA) and S-adenosylhomocysteine (SAH/AdoHcy) to adenine and the corresponding thioribose, 5'-methylthioribose and S-ribosylhomocysteine, respectively. Also cleaves 5'-deoxyadenosine, a toxic by-product of radical S-adenosylmethionine (SAM) enzymes, into 5-deoxyribose and adenine. The chain is 5'-methylthioadenosine/S-adenosylhomocysteine nucleosidase from Colwellia psychrerythraea (strain 34H / ATCC BAA-681) (Vibrio psychroerythus).